A 242-amino-acid chain; its full sequence is Proteasome subunit alpha (242 aa).

Belongs to the peptidase T1A family. The 20S proteasome core is composed of 14 alpha and 14 beta subunits that assemble into four stacked heptameric rings, resulting in a barrel-shaped structure. The two inner rings, each composed of seven catalytic beta subunits, are sandwiched by two outer rings, each composed of seven alpha subunits. The catalytic chamber with the active sites is on the inside of the barrel. Has a gated structure, the ends of the cylinder being occluded by the N-termini of the alpha-subunits. Is capped by the proteasome-associated ATPase, ARC.

It is found in the cytoplasm. Its pathway is protein degradation; proteasomal Pup-dependent pathway. With respect to regulation, the formation of the proteasomal ATPase ARC-20S proteasome complex, likely via the docking of the C-termini of ARC into the intersubunit pockets in the alpha-rings, may trigger opening of the gate for substrate entry. Interconversion between the open-gate and close-gate conformations leads to a dynamic regulation of the 20S proteasome proteolysis activity. Functionally, component of the proteasome core, a large protease complex with broad specificity involved in protein degradation. In Renibacterium salmoninarum (strain ATCC 33209 / DSM 20767 / JCM 11484 / NBRC 15589 / NCIMB 2235), this protein is Proteasome subunit alpha.